The sequence spans 418 residues: Nuclear hormone receptor family member nhr-209 (418 aa).

The segment at residues 43-121 (PEKCAVCKNA…VGMDSTAIRA (79 aa)) is a DNA-binding region (nuclear receptor). NR C4-type zinc fingers lie at residues 46-66 (CAVC…CNGC) and 82-104 (CMNH…CKGC). In terms of domain architecture, NR LBD spans 174-414 (TIPDGFEDMR…SHPPKSLFDE (241 aa)). The tract at residues 403 to 414 (ECSHPPKSLFDE) is AF-2.

It belongs to the nuclear hormone receptor family.

The protein resides in the nucleus. In terms of biological role, transcriptional regulator. Plays a role in modulation of lifespan and immunity. The sequence is that of Nuclear hormone receptor family member nhr-209 from Caenorhabditis elegans.